We begin with the raw amino-acid sequence, 473 residues long: Ribulose bisphosphate carboxylase large chain (473 aa).

Positions 1–2 (MS) are excised as a propeptide. N-acetylproline is present on Pro3. Residue Lys14 is modified to N6,N6,N6-trimethyllysine. Residues Asn123 and Thr173 each contribute to the substrate site. Lys175 functions as the Proton acceptor in the catalytic mechanism. Lys177 lines the substrate pocket. Lys201, Asp203, and Glu204 together coordinate Mg(2+). At Lys201 the chain carries N6-carboxylysine. The Proton acceptor role is filled by His294. Residues Arg295, His327, and Ser379 each contribute to the substrate site.

It belongs to the RuBisCO large chain family. Type I subfamily. In terms of assembly, heterohexadecamer of 8 large chains and 8 small chains; disulfide-linked. The disulfide link is formed within the large subunit homodimers. It depends on Mg(2+) as a cofactor. In terms of processing, the disulfide bond which can form in the large chain dimeric partners within the hexadecamer appears to be associated with oxidative stress and protein turnover.

The protein localises to the plastid. It localises to the chloroplast. The enzyme catalyses 2 (2R)-3-phosphoglycerate + 2 H(+) = D-ribulose 1,5-bisphosphate + CO2 + H2O. It catalyses the reaction D-ribulose 1,5-bisphosphate + O2 = 2-phosphoglycolate + (2R)-3-phosphoglycerate + 2 H(+). Functionally, ruBisCO catalyzes two reactions: the carboxylation of D-ribulose 1,5-bisphosphate, the primary event in carbon dioxide fixation, as well as the oxidative fragmentation of the pentose substrate in the photorespiration process. Both reactions occur simultaneously and in competition at the same active site. The polypeptide is Ribulose bisphosphate carboxylase large chain (Sesbania sesban (Egyptian riverhemp)).